The primary structure comprises 495 residues: MKGYLSLSILPLLVAASPVVVDSIHNGAAPILSSMNAKEVPDSYIVVFKKHVNAESAAAHHSWVQDIHSAQNERVELRKRSLFGFGEEAYLGLKNTFDIAGSLVGYSGHFHEDVIEQVRKHPDVEYIEKDSEVHTMEDPTVEKSAPWGLARISHRDSLSFGTFNKYLYASEGGEGVDAYTIDTGINVDHVDFEGRAQWGKTIPTDDEDADGNGHGTHCSGTIAGRKYGVAKKANLYAVKVLRSSGSGTMSDVVAGVEWAVKSHLKKVKDAKDGKIKGFKGSVANMSLGGGKSRTLEAAVNAGVEAGLHFAVAAGNDNADACNYSPAAAENPITVGASTLQDERAYFSNYGKCTDIFAPGLNILSTWIGSKHAVNTISGTSMASPHIAGLLAYFVSLQPSKDSAFAVDELTPKKLKKDIIAIATQGALTDIPSDTPNLLAWNGGGSSNYTDIIASGGYKVNASVKDRFEGLVHKAEKLLTEELGAIYSEIHDAAVA.

The first 16 residues, 1 to 16, serve as a signal peptide directing secretion; it reads MKGYLSLSILPLLVAA. The propeptide occupies 17-136; it reads SPVVVDSIHN…IEKDSEVHTM (120 aa). An Inhibitor I9 domain is found at 43 to 136; the sequence is SYIVVFKKHV…IEKDSEVHTM (94 aa). The Peptidase S8 domain occupies 146-452; it reads PWGLARISHR…GGSSNYTDII (307 aa). Catalysis depends on charge relay system residues D182 and H214. A glycan (N-linked (GlcNAc...) asparagine) is linked at N284. S380 functions as the Charge relay system in the catalytic mechanism. N-linked (GlcNAc...) asparagine glycosylation is found at N447 and N460.

It belongs to the peptidase S8 family.

The catalysed reaction is Hydrolysis of proteins with broad specificity, and of Bz-Arg-OEt &gt; Ac-Tyr-OEt. Does not hydrolyze peptide amides.. Functionally, alkaline protease that allows assimilation of proteinaceous substrates. Acts as a significant virulence factor in invasive aspergillosis. Required for regular sporulation. This chain is Alkaline protease 2 (alp2), found in Aspergillus fumigatus (strain CBS 144.89 / FGSC A1163 / CEA10) (Neosartorya fumigata).